The following is a 932-amino-acid chain: UPF0182 protein Syncc9902_1151 (932 aa).

Helical transmembrane passes span 4-24 (FLWI…VEWV), 40-60 (MLQL…VLWL), 85-105 (VLMV…DLAI), 124-144 (MASE…VSLC), 151-171 (WVAV…WGVW), 201-221 (IQLG…HAVW), 243-263 (YRWL…LVWL), 293-313 (LLAF…IGHL), and 315-335 (RLLL…TPLT).

It belongs to the UPF0182 family.

The protein resides in the cell membrane. This Synechococcus sp. (strain CC9902) protein is UPF0182 protein Syncc9902_1151.